We begin with the raw amino-acid sequence, 186 residues long: Type 1 phosphatases regulator ypi-1 (186 aa).

A compositionally biased stretch (polar residues) spans 1 to 32 (MTSVAQRQAQPAQPSTSQTAAPTRTQTETSSP). Residues 1–186 (MTSVAQRQAQ…SETQGPGGSK (186 aa)) form a disordered region. Low complexity predominate over residues 82 to 94 (DSSSSSDSSSSSD). Basic and acidic residues predominate over residues 122–137 (HDHDHDGREGGCNHDH). Over residues 138–151 (GRGRKHGNKGKKTE) the composition is skewed to basic residues.

This sequence belongs to the YPI1 family.

It localises to the nucleus. Its function is as follows. Regulator of type 1 phosphatases which maintains protein phosphatase activity under strict control. This chain is Type 1 phosphatases regulator ypi-1 (ypi-1), found in Neurospora crassa (strain ATCC 24698 / 74-OR23-1A / CBS 708.71 / DSM 1257 / FGSC 987).